Reading from the N-terminus, the 129-residue chain is MRLTPLLAALALPLLTVLATPLTPVGEAEVVEVDVAPRQISLNPASSCPKGQLWCCVSLDLVSNSLIAGLLVTLGILDPTGINTAGVQCTPLSWPFQMSCGNKDLCCDPDLPVVGLLLKLNCRSVNPLL.

A signal peptide spans M1 to A19. 4 cysteine pairs are disulfide-bonded: C48-C106, C55-C100, C56-C89, and C107-C122.

This sequence belongs to the fungal hydrophobin family. In terms of assembly, self-assembles to form functional amyloid fibrils called rodlets. Self-assembly into fibrillar rodlets occurs spontaneously at hydrophobic:hydrophilic interfaces and the rodlets further associate laterally to form amphipathic monolayers.

The protein resides in the secreted. The protein localises to the cell wall. In terms of biological role, aerial growth, conidiation, and dispersal of filamentous fungi in the environment rely upon a capability of their secreting small amphipathic proteins called hydrophobins (HPBs) with low sequence identity. Class I can self-assemble into an outermost layer of rodlet bundles on aerial cell surfaces, conferring cellular hydrophobicity that supports fungal growth, development and dispersal; whereas Class II form highly ordered films at water-air interfaces through intermolecular interactions but contribute nothing to the rodlet structure. The protein is Class I hydrophobin 11 of Pleurotus ostreatus (strain PC15) (Oyster mushroom).